Here is a 212-residue protein sequence, read N- to C-terminus: Small ribosomal subunit protein uS4c (212 aa).

The region spanning 89-152 (MRLDNIIFRL…RSRALVDKNL (64 aa)) is the S4 RNA-binding domain.

This sequence belongs to the universal ribosomal protein uS4 family. As to quaternary structure, part of the 30S ribosomal subunit. Contacts protein S5. The interaction surface between S4 and S5 is involved in control of translational fidelity.

It localises to the plastid. The protein resides in the chloroplast. One of the primary rRNA binding proteins, it binds directly to 16S rRNA where it nucleates assembly of the body of the 30S subunit. Its function is as follows. With S5 and S12 plays an important role in translational accuracy. In Staurastrum punctulatum (Green alga), this protein is Small ribosomal subunit protein uS4c (rps4).